A 189-amino-acid polypeptide reads, in one-letter code: Small ribosomal subunit protein uS5 (189 aa).

Positions 23 to 86 (FIDKLVHINR…ESAKREMIYV (64 aa)) constitute an S5 DRBM domain.

It belongs to the universal ribosomal protein uS5 family. In terms of assembly, part of the 30S ribosomal subunit. Contacts proteins S4 and S8.

Functionally, with S4 and S12 plays an important role in translational accuracy. Located at the back of the 30S subunit body where it stabilizes the conformation of the head with respect to the body. The polypeptide is Small ribosomal subunit protein uS5 (Bartonella bacilliformis (strain ATCC 35685 / KC583 / Herrer 020/F12,63)).